The chain runs to 63 residues: Kappa-theraphotoxin-Cg3a 1 (63 aa).

An N-terminal signal peptide occupies residues 1–21 (MKNTSILFILGLALLLVLAFE). Positions 22 to 29 (VQVGESDG) are excised as a propeptide. Disulfide bonds link C31/C46, C38/C51, and C45/C58.

Belongs to the neurotoxin 10 (Hwtx-1) family. 44 (Jztx-4) subfamily. As to expression, expressed by the venom gland.

The protein localises to the secreted. Its function is as follows. Gating modifier of Kv2.1/KCNB1, Kv2.2/KCNB2 and Kv4.3/KCND3 channels. The polypeptide is Kappa-theraphotoxin-Cg3a 1 (Chilobrachys guangxiensis (Chinese earth tiger tarantula)).